Here is a 154-residue protein sequence, read N- to C-terminus: 3-hydroxyacyl-[acyl-carrier-protein] dehydratase FabZ (154 aa).

The active site involves H55.

The protein belongs to the thioester dehydratase family. FabZ subfamily.

It localises to the cytoplasm. The enzyme catalyses a (3R)-hydroxyacyl-[ACP] = a (2E)-enoyl-[ACP] + H2O. In terms of biological role, involved in unsaturated fatty acids biosynthesis. Catalyzes the dehydration of short chain beta-hydroxyacyl-ACPs and long chain saturated and unsaturated beta-hydroxyacyl-ACPs. The polypeptide is 3-hydroxyacyl-[acyl-carrier-protein] dehydratase FabZ (Nitratidesulfovibrio vulgaris (strain DSM 19637 / Miyazaki F) (Desulfovibrio vulgaris)).